Reading from the N-terminus, the 150-residue chain is Protein A151R (150 aa).

The protein belongs to the asfivirus A151R family. As to quaternary structure, monomer. Homodimer. Interacts with protein B119L. Interacts with membrane protein E248R. Zn(2+) is required as a cofactor.

In terms of biological role, may participate in a redox cascade for the formation of disulfide bonds in viral proteins. The polypeptide is Protein A151R (African swine fever virus (isolate Tick/Malawi/Lil 20-1/1983) (ASFV)).